The following is a 94-amino-acid chain: PqqA binding protein (94 aa).

This sequence belongs to the PqqD family. As to quaternary structure, monomer. Interacts with PqqE.

Its pathway is cofactor biosynthesis; pyrroloquinoline quinone biosynthesis. Functions as a PqqA binding protein and presents PqqA to PqqE, in the pyrroloquinoline quinone (PQQ) biosynthetic pathway. The sequence is that of PqqA binding protein from Acinetobacter baumannii (strain AB307-0294).